Here is a 481-residue protein sequence, read N- to C-terminus: MSSLMEFQDRNTTNNETEHQKSITDQSSSVPAGVILPPPAIREIIDKSASYVARNGPAFEEKIRQNEQANTKFAFLHANDPYHPYYQHKLTEAREGKLKSHATGLSTQKTSTLARPIQKPIEATIPAPSPYLFSEPLPSISSLDLDVLRLTARYAAVRGSSFLVSLSQKEWNNTQFDFLKPNNALYPYFMRIVQQYTSLIREPISSPEQELRENVRDPYSLLSKIQPRVRWQSHMESQKKKQKEEAEKEKLEYAQIDWNDFVVVEVIQFTKSDEHAKLAKPTNLADLQTATLEQKSAMFTMPDQNYTIEEAPPTAEPWEPISAPKKQEFGVSLPPSLASPEKGGISSTTSVSPAAQASPVLSTTTQPKVQKPVPKAFQPKVPMEISPFSGELVPATELEEHMRLKLLDPRWQEQRKVEESRKSTLNLENVNVAANMKRLVSQRTDLFDVQNGVEISQEEIERRKRAATQSAWGATPTNKRR.

The segment covering Met1–Asn15 has biased composition (polar residues). The interval Met1–Val34 is disordered. SURP motif repeat units follow at residues Ile44–Tyr86 and Val147–Phe189. Disordered stretches follow at residues Pro335–Val373 and Gly452–Arg481. Polar residues-rich tracts occupy residues Ile345 to Lys368 and Ala467 to Arg481.

As to quaternary structure, belongs to the 40S cdc5-associated complex (or cwf complex), a spliceosome sub-complex reminiscent of a late-stage spliceosome composed of the U2, U5 and U6 snRNAs and at least brr2, cdc5, cwf2/prp3, cwf3/syf1, cwf4/syf3, cwf5/ecm2, spp42/cwf6, cwf7/spf27, cwf8, cwf9, cwf10, cwf11, cwf12, prp45/cwf13, cwf14, cwf15, cwf16, cwf17, cwf18, cwf19, cwf20, cwf21, cwf22, cwf23, cwf24, cwf25, cwf26, cyp7/cwf27, cwf28, cwf29/ist3, lea1, msl1, prp5/cwf1, prp10, prp12/sap130, prp17, prp22, sap61, sap62, sap114, sap145, slu7, smb1, smd1, smd3, smf1, smg1 and syf2.

Its subcellular location is the nucleus. Involved in pre-mRNA splicing. May be involved in endoplasmic reticulum-associated protein degradation (ERAD) and required for growth at low and high temperatures. In Schizosaccharomyces pombe (strain 972 / ATCC 24843) (Fission yeast), this protein is Pre-mRNA-splicing factor sap114 (sap114).